The following is a 95-amino-acid chain: Cell division protein FtsB (95 aa).

The Cytoplasmic segment spans residues 1–3 (MKW). The helical transmembrane segment at 4-21 (VTGLLVVLLLGLQYKLWI) threads the bilayer. The Periplasmic segment spans residues 22 to 95 (GEGSVAEVWQ…QVVGRPGETP (74 aa)). The stretch at 26–73 (VAEVWQLRQTLEAQRAENEELRYRNAALDAEVTDLKTGLDAIEERARR) forms a coiled coil.

The protein belongs to the FtsB family. As to quaternary structure, part of a complex composed of FtsB, FtsL and FtsQ.

It is found in the cell inner membrane. Essential cell division protein. May link together the upstream cell division proteins, which are predominantly cytoplasmic, with the downstream cell division proteins, which are predominantly periplasmic. This is Cell division protein FtsB from Thioalkalivibrio sulfidiphilus (strain HL-EbGR7).